The primary structure comprises 250 residues: tRNA (guanine-N(7)-)-methyltransferase (250 aa).

Positions 86, 111, 138, and 161 each coordinate S-adenosyl-L-methionine. The active site involves aspartate 161. Substrate contacts are provided by residues lysine 165, aspartate 197, and 229–232 (TEFE).

It belongs to the class I-like SAM-binding methyltransferase superfamily. TrmB family.

The catalysed reaction is guanosine(46) in tRNA + S-adenosyl-L-methionine = N(7)-methylguanosine(46) in tRNA + S-adenosyl-L-homocysteine. It functions in the pathway tRNA modification; N(7)-methylguanine-tRNA biosynthesis. Its function is as follows. Catalyzes the formation of N(7)-methylguanine at position 46 (m7G46) in tRNA. The chain is tRNA (guanine-N(7)-)-methyltransferase from Treponema pallidum (strain Nichols).